The chain runs to 313 residues: MNIIRYWSKQSYKKLKVDQEHNTTEYTNVCNSTSLGSTYTLPLKMELWKIYITLIYFLITNSNCFASEPLAWQITFQPPASPIMEELYHFHNFLLYIGTAIVLFVAGLLGFVCIRFNAKNNPVPAKFAHNLLIEIIWTVIPIIILVIIAVPSFRILRHAEKIPEIDLTIKVVGYQWYWHYIYPDYDNLEFDSVMISDKNLQIGQKRLLDVDNRIVIPENTTVRFLITAGDVIHSFAVPSLGFKIDAVPGRINETWTRVTKKGVYYGQCSELCGINHGFMPIAIEVVSKEDFNNWIALKNKTAMNNKSSKLMSK.

One can recognise an RPE1 insert domain in the interval 5–51 (RYWSKQSYKKLKVDQEHNTTEYTNVCNSTSLGSTYTLPLKMELWKIY). Transmembrane regions (helical) follow at residues 39–59 (YTLP…YFLI), 94–114 (LLYI…FVCI), and 131–151 (LLIE…IAVP). Residues histidine 233, cysteine 268, cysteine 272, and histidine 276 each coordinate Cu cation.

The protein belongs to the cytochrome c oxidase subunit 2 family. Cu cation serves as cofactor. It depends on heme as a cofactor.

Its subcellular location is the cell membrane. It carries out the reaction 4 Fe(II)-[cytochrome c] + O2 + 8 H(+)(in) = 4 Fe(III)-[cytochrome c] + 2 H2O + 4 H(+)(out). In terms of biological role, subunits I and II form the functional core of the enzyme complex. Electrons originating in cytochrome c are transferred via heme a and Cu(A) to the binuclear center formed by heme a3 and Cu(B). The protein is Probable cytochrome c oxidase subunit 2 (ctaC) of Rickettsia prowazekii (strain Madrid E).